The primary structure comprises 208 residues: Microtubule-associated protein Jupiter (208 aa).

Disordered stretches follow at residues 24–43 (RPPG…QTPR) and 82–106 (RGQK…PGKN). Ser30 is modified (phosphoserine). Thr41 carries the phosphothreonine modification. The segment covering 82 to 93 (RGQKTVDSHSRL) has biased composition (basic and acidic residues). Thr98 and Thr102 each carry phosphothreonine. 3 positions are modified to phosphoserine: Ser111, Ser139, and Ser150. Residues 132–208 (HYNGKSGSVS…PPGGYSSGLW (77 aa)) form a disordered region. Positions 137 to 150 (SGSVSSASSSVSSS) are enriched in low complexity. Polar residues-rich tracts occupy residues 151–165 (TENL…SEGN) and 178–189 (EYSQRQESSNGG).

It belongs to the MAP Jupiter family. Ubiquitous expression throughout development. Expressed during cell division in the syncytial embryo. Expressed in developing photoreceptors of the eye imaginal disk of the third larval stage. In adults, highly expressed in neurons of the brain, concentrated in axons. In the adult ovaries, expression accumulates in the germarium and the polar follicular cells as well as in the oocyte along the microtubule network.

The protein localises to the nucleus. It localises to the cytoplasm. Its subcellular location is the cytoskeleton. The protein resides in the spindle. Binds to all microtubule populations. This chain is Microtubule-associated protein Jupiter, found in Drosophila melanogaster (Fruit fly).